Consider the following 266-residue polypeptide: Nickel import ATP-binding protein NikE (266 aa).

The ABC transporter domain maps to 4–252 (ISADNIVKIY…RHPASRLLRE (249 aa)). ATP is bound at residue 45 to 52 (GRSGCGKS).

This sequence belongs to the ABC transporter superfamily. Nickel importer (TC 3.A.1.5.3) family. As to quaternary structure, the complex is composed of two ATP-binding proteins (NikD and NikE), two transmembrane proteins (NikB and NikC) and a solute-binding protein (NikA).

It localises to the cell inner membrane. It carries out the reaction Ni(2+)(out) + ATP + H2O = Ni(2+)(in) + ADP + phosphate + H(+). In terms of biological role, part of the ABC transporter complex NikABCDE involved in nickel import. Responsible for energy coupling to the transport system. This is Nickel import ATP-binding protein NikE from Brucella suis biovar 1 (strain 1330).